Here is a 244-residue protein sequence, read N- to C-terminus: 1-(5-phosphoribosyl)-5-[(5-phosphoribosylamino)methylideneamino] imidazole-4-carboxamide isomerase (244 aa).

Aspartate 15 functions as the Proton acceptor in the catalytic mechanism. Aspartate 136 (proton donor) is an active-site residue.

The protein belongs to the HisA/HisF family.

It localises to the cytoplasm. It carries out the reaction 1-(5-phospho-beta-D-ribosyl)-5-[(5-phospho-beta-D-ribosylamino)methylideneamino]imidazole-4-carboxamide = 5-[(5-phospho-1-deoxy-D-ribulos-1-ylimino)methylamino]-1-(5-phospho-beta-D-ribosyl)imidazole-4-carboxamide. Its pathway is amino-acid biosynthesis; L-histidine biosynthesis; L-histidine from 5-phospho-alpha-D-ribose 1-diphosphate: step 4/9. This is 1-(5-phosphoribosyl)-5-[(5-phosphoribosylamino)methylideneamino] imidazole-4-carboxamide isomerase from Dehalococcoides mccartyi (strain CBDB1).